The chain runs to 239 residues: Orotidine 5'-phosphate decarboxylase (239 aa).

Substrate contacts are provided by residues aspartate 15, lysine 37, 64–73 (DLKFHDIPNT), threonine 126, arginine 187, glutamine 196, glycine 216, and arginine 217. Lysine 66 serves as the catalytic Proton donor.

The protein belongs to the OMP decarboxylase family. Type 1 subfamily. Homodimer.

The catalysed reaction is orotidine 5'-phosphate + H(+) = UMP + CO2. Its pathway is pyrimidine metabolism; UMP biosynthesis via de novo pathway; UMP from orotate: step 2/2. Functionally, catalyzes the decarboxylation of orotidine 5'-monophosphate (OMP) to uridine 5'-monophosphate (UMP). This is Orotidine 5'-phosphate decarboxylase from Geobacter sulfurreducens (strain ATCC 51573 / DSM 12127 / PCA).